A 529-amino-acid chain; its full sequence is GTPase Obg (529 aa).

One can recognise an Obg domain in the interval 2–159 (ASFVDRVVLH…SDIVLELKSI (158 aa)). Residues 160 to 343 (ADIALVGFPS…LGFAMAEIVK (184 aa)) form the OBG-type G domain. GTP-binding positions include 166–173 (GFPSAGKS), 191–195 (FTTLI), 212–215 (DVPG), 295–298 (NKVD), and 324–326 (SAT). Residues S173 and T193 each coordinate Mg(2+). In terms of domain architecture, OCT spans 363–447 (PRAVNEAGFK…DDGVVFDWEP (85 aa)). Basic and acidic residues predominate over residues 466 to 502 (FADIGDRPTRGQKRDEQQERRDAKAAARAELEAERKA). The tract at residues 466–529 (FADIGDRPTR…ESGLTTENEE (64 aa)) is disordered.

The protein belongs to the TRAFAC class OBG-HflX-like GTPase superfamily. OBG GTPase family. As to quaternary structure, monomer. Mg(2+) is required as a cofactor.

Its subcellular location is the cytoplasm. In terms of biological role, an essential GTPase which binds GTP, GDP and possibly (p)ppGpp with moderate affinity, with high nucleotide exchange rates and a fairly low GTP hydrolysis rate. Plays a role in control of the cell cycle, stress response, ribosome biogenesis and in those bacteria that undergo differentiation, in morphogenesis control. The polypeptide is GTPase Obg (Arthrobacter sp. (strain FB24)).